Consider the following 764-residue polypeptide: Plasma membrane fusion protein prm-1 (764 aa).

At 1–61 (MVYNEKNGGG…YLGLRARLSQ (61 aa)) the chain is on the extracellular side. Residues 62 to 82 (LWFNRWTILLILVLIRVIILT) traverse the membrane as a helical segment. The Cytoplasmic segment spans residues 83-149 (ANLKENLGDA…LKMILTGVQA (67 aa)). The helical transmembrane segment at 150-170 (IIMFVINMYIGTFACLVAAFI) threads the bilayer. At 171–334 (HGGLHVATAV…SLITLVYKAK (164 aa)) the chain is on the extracellular side. Residues asparagine 271 and asparagine 315 are each glycosylated (N-linked (GlcNAc...) asparagine). A helical transmembrane segment spans residues 335-355 (IAFLVVIIILALLAIFVMGYI). At 356-424 (EYRGFKRERE…AFAYATSLPA (69 aa)) the chain is on the cytoplasmic side. The chain crosses the membrane as a helical span at residues 425–445 (LFVLSLAVAGMLSCLFQWVLL). At 446–624 (RQIEKKAPEL…NGVIQEALIT (179 aa)) the chain is on the extracellular side. N-linked (GlcNAc...) asparagine glycosylation is found at asparagine 479, asparagine 508, and asparagine 527. A helical transmembrane segment spans residues 625-645 (LGLFLTYVIVVLIGVMGALIG). Topologically, residues 646 to 764 (WATPGKTRGE…EKVPGYFTPI (119 aa)) are cytoplasmic. Disordered regions lie at residues 653–701 (RGEG…GGGG) and 735–754 (HQRTSSYPTVESPDPMPHGD).

Belongs to the PRM1 family.

Its subcellular location is the cell membrane. Its function is as follows. Involved in cell fusion during mating by stabilizing the plasma membrane fusion event. This is Plasma membrane fusion protein prm-1 (prm-1) from Neurospora crassa (strain ATCC 24698 / 74-OR23-1A / CBS 708.71 / DSM 1257 / FGSC 987).